The chain runs to 418 residues: Equilibrative nucleotide transporter 3 (418 aa).

11 helical membrane passes run 20–40 (MVVC…MLTI), 56–76 (VLTL…AYHE), 86–106 (LIGY…DLAT), 112–132 (IGPY…DATV), 142–162 (LMCP…GALT), 186–206 (MFLA…AYVF), 264–284 (YAVN…GFLY), 291–311 (GLGD…DLVG), 326–346 (KLIT…YFTA), 353–373 (WMIM…VCIM), and 392–412 (LVIF…LWLI).

It belongs to the SLC29A/ENT transporter (TC 2.A.57) family. In terms of tissue distribution, expressed in root tips, vasculature of roots and leaves, and meristems of leaf primordia. Expressed in flowers and siliques.

It is found in the cell membrane. Its function is as follows. Nucleoside transporter that functions as a pyrimidine nucleoside carrier in all organs. Has high affinity for adenosine and uridine when expressed in a heterologous system (yeast). Mediates proton-dependent adenosine or uridine transport in Xenopus oocytes. The polypeptide is Equilibrative nucleotide transporter 3 (Arabidopsis thaliana (Mouse-ear cress)).